Consider the following 669-residue polypeptide: MVKKKVATKKNSPSLAIAKKKSRSNKDVVSVEAPIISSYNDRIRPLLDTVDRLRNLNVMREGIHLPTIVVVGDQSSGKSSVLESLAGISLPRGQGICTRVPLVMRLQRSSSPEPEIWLEYNDKVVPTDEEHIAEAIRAATDVIAGSGKGVSDAPLTLHVKKAGVPDLTMVDLPGITRVPVNGQPENIYEQISGMIMEYIEPQESIILNVLSATVDFTTCESIRMSRKVDKTGQRTLAVVTKADMAPEGLLQKVTADDVSIVLGYVCVRNRIGEETYEEARMQEELLFRTHPVLSLIDEDIVGIPVLAQKLMLIQSSMIARCLPKIVSKINQKLDTAVLELNKLPMVMASTGEALMALMDIIGSAKESLLRILVQGDFSEYPDDQNMHCTARLADMLSQFSDSLQAKPKEVAEFLMDEIKILDECKCVGLPNFIPRSAFLAILSQHVDGIQDKPVEFINKIWDYIEDVLSSVTAKRSDNFPQIQSSIKRAGRNLISKIKEQSVNRVMEIVEMEKLTDYTCNPEYMTSWTQKTSAQESFIDAVVKNENIPDYFSVTGFGNVKISHLRKYHAHLLIPAFDMKMRITSYWKIVLRRIVDNLALYLQLSVKSLVNTRFQKEIVAEMVDPRDGGGVEKMLEESPLVASKREKLQNSIKLLKESKDAVAAIVDQNC.

Positions 1-21 (MVKKKVATKKNSPSLAIAKKK) are disordered. The Dynamin-type G domain maps to 62 to 323 (GIHLPTIVVV…QSSMIARCLP (262 aa)). The interval 72 to 79 (GDQSSGKS) is G1 motif. A GTP-binding site is contributed by 72 to 79 (GDQSSGKS). Residues 97–99 (CTR) are G2 motif. The tract at residues 171–174 (DLPG) is G3 motif. GTP is bound by residues 171–175 (DLPGI) and 240–243 (TKAD). Positions 240–243 (TKAD) are G4 motif. Residue glutamate 273 is a region of interest, G5 motif. The GED domain occupies 575–669 (AFDMKMRITS…AVAAIVDQNC (95 aa)).

The protein belongs to the TRAFAC class dynamin-like GTPase superfamily. Dynamin/Fzo/YdjA family.

Its subcellular location is the cytoplasm. It localises to the cytoskeleton. Functionally, putative microtubule-associated force-producing protein, able to bind and hydrolyze GTP. The protein is Dynamin-related protein 4C (DRP4C) of Arabidopsis thaliana (Mouse-ear cress).